A 293-amino-acid chain; its full sequence is MNEQELKQMIEGILTEMSGGKTTDTVAAAPTKSVVETVITEGSIPDITEVDIKKQLLVPEPADREGYLKMKQMTPARLGLWRAGPRYKTETILRFRADHAVAQDSVFSYVSEDLVKEMNFIPVNTKCQDKDEYLTRPDLGREFDNEMVEVIRANTTKNAKLQIVVGDGLSSAAIEANIKDILPSIKQGLKMYNLDFDNIIFVKHCRVPSMDQIGEITGADVVCLLVGERPGLVTAESMSAYIAYKPTIGMPEARRTVISNIHSGGTPPVEAGAYIAELIHNMLEKKCSGIDLK.

Positions 207 and 228 each coordinate adenosylcob(III)alamin.

It belongs to the EutC family. In terms of assembly, the basic unit is a heterodimer which dimerizes to form tetramers. The heterotetramers trimerize; 6 large subunits form a core ring with 6 small subunits projecting outwards. Adenosylcob(III)alamin is required as a cofactor.

The protein resides in the bacterial microcompartment. The catalysed reaction is ethanolamine = acetaldehyde + NH4(+). It functions in the pathway amine and polyamine degradation; ethanolamine degradation. Its function is as follows. Catalyzes the deamination of various vicinal amino-alcohols to oxo compounds. Allows this organism to utilize ethanolamine as the sole source of nitrogen and carbon in the presence of external vitamin B12. The sequence is that of Ethanolamine ammonia-lyase small subunit from Listeria monocytogenes serotype 4b (strain CLIP80459).